The following is a 1149-amino-acid chain: MASFKRDLYLFLAVFLSISGVWSFSELFFIKEPHDVTAMRRDAVVLDCQAHGEAPIGIRWLKNGVTITESERVYSLSNGSLLISEVESRKDKSDEGFYQCLAQNKYGSILSQRARLTIASLSTFTQQPASIIVMEGSVARFTCKITATPPPIITWEFNRVTLPLATERITVLPSGVLQIQGVEQRDAGSYRCVAANIVSRRRSTEATLTVTPAMSPRAPQRPRIIAGPQNLTVPAHSTALLECMASGNPRPLISWSRADHKSIDVHKTKVLGNGNLIISDVNPQHAGIYFCRATTPGTRNYTIAAANITVLAPPSLVEWPESVTRPRAGTARFVCTAEGFPTPQITWLKNGEPVRSNGRIKMYNSKLVINQIIPEDDGIYQCEAENIQGSVLAMARLIVVMSDNRPSAPRNIRADTVSSSAIVLAWDRPAYNSEKVIAYSVHYMKAEGLNNEEYQIVIGNDTTRYIIDDLEAGRNYTFYIVAYMPMGASRMSDHVIQHTLEDVPLRAPELSLTSRSPSDIQVSWQPLSHKLSRGRVSAYRLSYRTSSDGTLTQLELSAHKTHQLLEGLQPDTTYLLRIAAATAVGWGEPSAWSSHRTPKASSTKVPLAPELQLESLNCTTVTLRWHLPAGSSSGLQGFKLSYHEEGQSEAAQAQIPPHHRQHTIGGLDPRKKYHIKLLAFSFMGDGYQADQTISTPGCVSVRDRLVPPPPPPHHVYAHSNSSSSVFLHWARPAFTSAQTLNYTVRCNPVGLQNASLVLYLQTAAQSLLVTDLEPNTNYEFAVRLHVDLLSSPWSPVVYQTTLPEAPSRAPVGVKVTLIEGDSALVSWKAPDDRSAAAVTHYTVLYATRRAWAAGDWQMLQREGSITMALLENLQPGQVYLVQVSASNQMGDGPFSAAVELTIHTDGHAHRTHGFSHATVFSDGFYHLDQRSMAGIAVGVCIALTCIIICILILACRSKTRKSCTTKSIRQAGGQTPPTAVRLANESAAESVEVMMPMMRDHFIDAKGGTNLIINSYGPVKPNIEKKRRKRWSFFKKNEKEVKKVSSPAYSYHPGTTLLCYTETSPENPPTTLQGLFGPSGGDSEGSHSSEGSHETSDSGRYSHDDTEATNVSIRSRPASLQDDGNQTPVHEKQLETTLQEQEMTDLHPV.

Residues 1 to 23 (MASFKRDLYLFLAVFLSISGVWS) form the signal peptide. Over 24–932 (FSELFFIKEP…GFYHLDQRSM (909 aa)) the chain is Extracellular. 4 consecutive Ig-like domains span residues 27–117 (LFFI…ARLT), 122–209 (STFT…ATLT), 222–309 (PRII…ANIT), and 314–399 (PSLV…RLIV). 2 disulfides stabilise this stretch: Cys-48/Cys-100 and Cys-143/Cys-192. The N-linked (GlcNAc...) asparagine glycan is linked to Asn-78. The N-linked (GlcNAc...) asparagine glycan is linked to Asn-230. A disulfide bridge connects residues Cys-243 and Cys-291. Asn-300 and Asn-307 each carry an N-linked (GlcNAc...) asparagine glycan. An intrachain disulfide couples Cys-335 to Cys-382. 5 consecutive Fibronectin type-III domains span residues 408-502 (APRN…TLED), 504-600 (PLRA…TPKA), 605-704 (VPLA…VRDR), 711-804 (PPHH…TLPE), and 809-905 (APVG…IHTD). N-linked (GlcNAc...) asparagine glycosylation is found at Asn-460 and Asn-475. Residue Asn-617 is glycosylated (N-linked (GlcNAc...) asparagine). The interval 646-666 (GQSEAAQAQIPPHHRQHTIGG) is disordered. N-linked (GlcNAc...) asparagine glycans are attached at residues Asn-720, Asn-741, and Asn-753. A helical membrane pass occupies residues 933 to 953 (AGIAVGVCIALTCIIICILIL). The Cytoplasmic portion of the chain corresponds to 954–1149 (ACRSKTRKSC…EQEMTDLHPV (196 aa)). Positions 1060 to 1149 (YTETSPENPP…EQEMTDLHPV (90 aa)) are disordered. Over residues 1061–1073 (TETSPENPPTTLQ) the composition is skewed to polar residues. Over residues 1084–1106 (EGSHSSEGSHETSDSGRYSHDDT) the composition is skewed to basic and acidic residues.

This sequence belongs to the immunoglobulin superfamily. DCC family. Expression begins in the posterior region of the embryo and this posterior restriction persists at the 4 s stage. At early somite stages, expressed along the neural tube with lower levels in the lateral and paraxial mesoderm. Expression decreases caudally and rostrally becomes restricted to the ventral part of the brain. Widespread in the spinal cord at 30 hours post-fertilization (hpf) and is also expressed in the lens from this time. At 40 hpf, expression is restricted to the lens.

The protein resides in the membrane. In terms of biological role, may play a role in anteroposterior axis elongation. The sequence is that of Protogenin A from Danio rerio (Zebrafish).